The sequence spans 356 residues: 4-hydroxy-3-methylbut-2-en-1-yl diphosphate synthase (flavodoxin) (356 aa).

4 residues coordinate [4Fe-4S] cluster: cysteine 264, cysteine 267, cysteine 299, and glutamate 306.

This sequence belongs to the IspG family. [4Fe-4S] cluster serves as cofactor.

The enzyme catalyses (2E)-4-hydroxy-3-methylbut-2-enyl diphosphate + oxidized [flavodoxin] + H2O + 2 H(+) = 2-C-methyl-D-erythritol 2,4-cyclic diphosphate + reduced [flavodoxin]. The protein operates within isoprenoid biosynthesis; isopentenyl diphosphate biosynthesis via DXP pathway; isopentenyl diphosphate from 1-deoxy-D-xylulose 5-phosphate: step 5/6. In terms of biological role, converts 2C-methyl-D-erythritol 2,4-cyclodiphosphate (ME-2,4cPP) into 1-hydroxy-2-methyl-2-(E)-butenyl 4-diphosphate. In Natranaerobius thermophilus (strain ATCC BAA-1301 / DSM 18059 / JW/NM-WN-LF), this protein is 4-hydroxy-3-methylbut-2-en-1-yl diphosphate synthase (flavodoxin).